We begin with the raw amino-acid sequence, 804 residues long: Phenylalanine--tRNA ligase beta subunit (804 aa).

Residues 38-148 form the tRNA-binding domain; it reads RSYLKGFVIA…EDVPIGASFA (111 aa). In terms of domain architecture, B5 spans 401-476; the sequence is PEIRQITFPL…RIYGLDKIKP (76 aa). Positions 454, 460, 463, and 464 each coordinate Mg(2+). Residues 710–803 form the FDX-ACB domain; sequence SSLQMVRRDF…VTRMTGASLR (94 aa).

Belongs to the phenylalanyl-tRNA synthetase beta subunit family. Type 1 subfamily. In terms of assembly, tetramer of two alpha and two beta subunits. Mg(2+) serves as cofactor.

Its subcellular location is the cytoplasm. The catalysed reaction is tRNA(Phe) + L-phenylalanine + ATP = L-phenylalanyl-tRNA(Phe) + AMP + diphosphate + H(+). The polypeptide is Phenylalanine--tRNA ligase beta subunit (Bartonella henselae (strain ATCC 49882 / DSM 28221 / CCUG 30454 / Houston 1) (Rochalimaea henselae)).